Reading from the N-terminus, the 215-residue chain is HTH-type transcriptional repressor FabR (215 aa).

The HTH tetR-type domain occupies 10–70 (KTRRSLVEAA…TMVDESGLML (61 aa)). Residues 33 to 52 (SLREVAREAGIAPTSFYRHF) constitute a DNA-binding region (H-T-H motif).

As to quaternary structure, homodimer.

The protein localises to the cytoplasm. In terms of biological role, represses the transcription of fabB, involved in unsaturated fatty acid (UFA) biosynthesis. By controlling UFA production, FabR directly influences the physical properties of the membrane bilayer. This chain is HTH-type transcriptional repressor FabR, found in Escherichia coli O1:K1 / APEC.